The primary structure comprises 147 residues: Large ribosomal subunit protein mL40 (147 aa).

The N-terminal 26 residues, 1–26 (MLAQTFKKPHRAVLEQVSGTTVFIRN), are a transit peptide targeting the mitochondrion.

Belongs to the mitochondrion-specific ribosomal protein mL40 family. In terms of assembly, component of the mitochondrial large ribosomal subunit (mt-LSU). Mature yeast 74S mitochondrial ribosomes consist of a small (37S) and a large (54S) subunit. The 37S small subunit contains a 15S ribosomal RNA (15S mt-rRNA) and 34 different proteins. The 54S large subunit contains a 21S rRNA (21S mt-rRNA) and 46 different proteins.

The protein resides in the mitochondrion. Its function is as follows. Component of the mitochondrial ribosome (mitoribosome), a dedicated translation machinery responsible for the synthesis of mitochondrial genome-encoded proteins, including at least some of the essential transmembrane subunits of the mitochondrial respiratory chain. The mitoribosomes are attached to the mitochondrial inner membrane and translation products are cotranslationally integrated into the membrane. This is Large ribosomal subunit protein mL40 (MRPL28) from Saccharomyces cerevisiae (strain ATCC 204508 / S288c) (Baker's yeast).